Here is a 520-residue protein sequence, read N- to C-terminus: RNA polymerase sigma factor sigA (520 aa).

The transit peptide at 1–66 (MTATPAVIGL…APATPKLTAV (66 aa)) directs the protein to the chloroplast. Gly residues predominate over residues 37-49 (GGGGGGGGGGGGD). 3 disordered regions span residues 37 to 57 (GGGG…APPA), 87 to 117 (HHSS…AHAH), and 171 to 190 (SVSA…TKNG). The span at 96–108 (APPPPPPPPPTPS) shows a compositional bias: pro residues. Basic residues predominate over residues 175 to 187 (RQRRMSGRRRGRT). A Polymerase core binding motif is present at residues 305–318 (DLIQGGLIGLLRGI). The segment at residues 479–498 (WEDISRQFGLSRERVRQVGL) is a DNA-binding region (H-T-H motif).

This sequence belongs to the sigma-70 factor family. In terms of tissue distribution, expressed in shoots. Expressed in the tips of fully elongated leaves. Expressed in leaf blades.

The protein localises to the plastid. It localises to the chloroplast. In terms of biological role, sigma factors are initiation factors that promote the attachment of plastid-encoded RNA polymerase (PEP) to specific initiation sites and are then released. Controls the transcription of the psaA and psaB genes in chloroplast, and thus maintains the abundance of the core protein complex PsaA-PsaB of photosystem I (PSI) in the thylakoid membrane. Maintains PSI activity, sufficient rate of electron transfer from PSII to PSI, and photochemical efficiency. The sequence is that of RNA polymerase sigma factor sigA from Oryza sativa subsp. japonica (Rice).